A 378-amino-acid polypeptide reads, in one-letter code: Ribosomal RNA large subunit methyltransferase G (378 aa).

It belongs to the methyltransferase superfamily. RlmG family.

The protein resides in the cytoplasm. It catalyses the reaction guanosine(1835) in 23S rRNA + S-adenosyl-L-methionine = N(2)-methylguanosine(1835) in 23S rRNA + S-adenosyl-L-homocysteine + H(+). Specifically methylates the guanine in position 1835 (m2G1835) of 23S rRNA. This Enterobacter sp. (strain 638) protein is Ribosomal RNA large subunit methyltransferase G.